A 456-amino-acid chain; its full sequence is Yersinopine synthase (456 aa).

NADP(+)-binding positions include 12–15, 35–40, and threonine 154; these read AGPA and NRPSTK. The active-site Proton donor/acceptor is the histidine 242.

This sequence belongs to the staphylopine dehydrogenase family. In terms of assembly, homodimer.

It carries out the reaction yersinopine + NADP(+) + H2O = (2S)-2-amino-4-{[(1S)-1-carboxy-2-(1H-imidazol-4-yl)ethyl]amino}butanoate + pyruvate + NADPH + H(+). Its function is as follows. Catalyzes the NADPH-dependent reductive condensation of pyruvate to the intermediate formed by the adjacently encoded enzyme y2836, namely (2S)-2-amino-4-{[(1S)-1-carboxy-2-(1H-imidazol-4-yl)ethyl]amino}butanoate, leading to the production of yersinopine. This is the last step in the biosynthesis of the metallophore yersinopine, which is involved in metal acquisition and thus enables bacterial growth inside the host, where metal access is limited. Therefore, this enzyme probably contributes to Yersinia virulence. Cannot use alpha-ketoglutarate in place of pyruvate, and displays only poor efficiency with oxaloacetate and glyoxylate. The chain is Yersinopine synthase from Yersinia pestis.